A 350-amino-acid chain; its full sequence is Transmembrane protein 185B (350 aa).

The next 7 membrane-spanning stretches (helical) occupy residues 16-36, 41-61, 81-101, 111-131, 168-188, 211-231, and 240-260; these read LIYA…DGVI, WAVF…ASVG, FKAM…EVLV, FWLL…AACV, WLVV…VVLY, VTMA…EVLL, and MFSY…LMAT.

It belongs to the TMEM185 family.

The protein localises to the membrane. This chain is Transmembrane protein 185B (TMEM185B), found in Bos taurus (Bovine).